Reading from the N-terminus, the 648-residue chain is Macrolide export ATP-binding/permease protein MacB (648 aa).

The 239-residue stretch at 5-243 folds into the ABC transporter domain; the sequence is LELKDIRRSY…AGGTEPVVNT (239 aa). Residue 41–48 participates in ATP binding; it reads GASGSGKS. Helical transmembrane passes span 273–293, 523–543, 576–596, and 611–631; these read LLTM…VVVG, LFMT…VMNI, AVLV…LIAF, and PLAL…FGWL.

It belongs to the ABC transporter superfamily. Macrolide exporter (TC 3.A.1.122) family. Homodimer. Part of the tripartite efflux system MacAB-TolC, which is composed of an inner membrane transporter, MacB, a periplasmic membrane fusion protein, MacA, and an outer membrane component, TolC. The complex forms a large protein conduit and can translocate molecules across both the inner and outer membranes. Interacts with MacA.

It is found in the cell inner membrane. Its function is as follows. Part of the tripartite efflux system MacAB-TolC. MacB is a non-canonical ABC transporter that contains transmembrane domains (TMD), which form a pore in the inner membrane, and an ATP-binding domain (NBD), which is responsible for energy generation. Confers resistance against macrolides. In Escherichia coli O157:H7, this protein is Macrolide export ATP-binding/permease protein MacB.